We begin with the raw amino-acid sequence, 191 residues long: A-type ATP synthase subunit E (191 aa).

Belongs to the V-ATPase E subunit family. Has multiple subunits with at least A(3), B(3), C, D, E, F, H, I and proteolipid K(x). Post-translationally, the N-terminus is blocked.

It is found in the cell membrane. Its function is as follows. Component of the A-type ATP synthase that produces ATP from ADP in the presence of a proton gradient across the membrane. In Sulfurisphaera tokodaii (strain DSM 16993 / JCM 10545 / NBRC 100140 / 7) (Sulfolobus tokodaii), this protein is A-type ATP synthase subunit E.